Reading from the N-terminus, the 236-residue chain is uncharacterized protein (236 aa).

7 helical membrane-spanning segments follow: residues 32-52 (MALALLLTGVAAITTISVEPI), 61-81 (FGTIIMFAPLGIALYFFMGFG), 90-110 (ILFWVYAGLTGMSLSYLALIY), 115-135 (IARTFFICSSVFGAMSLYGYS), 144-164 (GSFFAMGLIGLIIASLVNLFL), 167-187 (SSLSFATSLIGIVVFMGLIAW), and 208-228 (LSIMAAFTLYLDFINLFLYLM).

Belongs to the BI1 family.

Its subcellular location is the cell membrane. This is an uncharacterized protein from Rickettsia prowazekii (strain Madrid E).